The following is a 97-amino-acid chain: Large ribosomal subunit protein bL21 (97 aa).

It belongs to the bacterial ribosomal protein bL21 family. As to quaternary structure, part of the 50S ribosomal subunit. Contacts protein L20.

Its function is as follows. This protein binds to 23S rRNA in the presence of protein L20. This Persephonella marina (strain DSM 14350 / EX-H1) protein is Large ribosomal subunit protein bL21.